Here is a 142-residue protein sequence, read N- to C-terminus: Pleckstrin homology-like domain family A member 2 (142 aa).

At Ser3 the chain carries Phosphoserine. In terms of domain architecture, PH spans 7–99 (VLREGELEKR…WNASITLALI (93 aa)).

This sequence belongs to the PHLDA2 family.

The protein localises to the cytoplasm. The protein resides in the membrane. Plays a role in regulating placenta growth. May act via its PH domain that competes with other PH domain-containing proteins, thereby preventing their binding to membrane lipids. The chain is Pleckstrin homology-like domain family A member 2 (PHLDA2) from Bos taurus (Bovine).